The chain runs to 283 residues: Lipoyl synthase (283 aa).

Residues Cys-35, Cys-40, Cys-46, Cys-61, Cys-65, Cys-68, and Ser-273 each coordinate [4Fe-4S] cluster. Residues 47 to 262 (FRSRQATFLI…RERALAMGFK (216 aa)) form the Radical SAM core domain.

The protein belongs to the radical SAM superfamily. Lipoyl synthase family. [4Fe-4S] cluster serves as cofactor.

It localises to the cytoplasm. It catalyses the reaction [[Fe-S] cluster scaffold protein carrying a second [4Fe-4S](2+) cluster] + N(6)-octanoyl-L-lysyl-[protein] + 2 oxidized [2Fe-2S]-[ferredoxin] + 2 S-adenosyl-L-methionine + 4 H(+) = [[Fe-S] cluster scaffold protein] + N(6)-[(R)-dihydrolipoyl]-L-lysyl-[protein] + 4 Fe(3+) + 2 hydrogen sulfide + 2 5'-deoxyadenosine + 2 L-methionine + 2 reduced [2Fe-2S]-[ferredoxin]. Its pathway is protein modification; protein lipoylation via endogenous pathway; protein N(6)-(lipoyl)lysine from octanoyl-[acyl-carrier-protein]: step 2/2. Catalyzes the radical-mediated insertion of two sulfur atoms into the C-6 and C-8 positions of the octanoyl moiety bound to the lipoyl domains of lipoate-dependent enzymes, thereby converting the octanoylated domains into lipoylated derivatives. In Geotalea uraniireducens (strain Rf4) (Geobacter uraniireducens), this protein is Lipoyl synthase.